The primary structure comprises 309 residues: MEMO1 family protein C4H3.04c (309 aa).

The protein belongs to the MEMO1 family.

This is MEMO1 family protein C4H3.04c from Schizosaccharomyces pombe (strain 972 / ATCC 24843) (Fission yeast).